The following is a 192-amino-acid chain: Transcription termination/antitermination protein NusG (192 aa).

The protein belongs to the NusG family.

Participates in transcription elongation, termination and antitermination. This chain is Transcription termination/antitermination protein NusG, found in Rickettsia prowazekii (strain Madrid E).